Reading from the N-terminus, the 174-residue chain is Type II secretion system protein M (174 aa).

The Cytoplasmic portion of the chain corresponds to 1–32 (MKVMTQFHERLRAQAETSQLAIRWRGLPARDR). A helical membrane pass occupies residues 33-52 (LALLWLGAFLLLVVLYLALW). The Periplasmic portion of the chain corresponds to 53-174 (RPAERHLQSA…VSARLSLRVE (122 aa)).

Belongs to the GSP M family. In terms of assembly, type II secretion system is composed of four main components: the outer membrane complex, the inner membrane complex, the cytoplasmic secretion ATPase and the periplasm-spanning pseudopilus. Forms homodimers. Interacts with XcpY/GspL. Interacts with XcpR/GspE and XcpS/GspF.

The protein localises to the cell inner membrane. Its function is as follows. Inner membrane component of the type II secretion system required for the energy-dependent secretion of extracellular factors such as proteases and toxins from the periplasm. Plays a role in the complex assembly and recruits XcpY resulting in a stable complex in the inner membrane. Provides thus a link between the energy-providing XcpR protein in the cytoplasm and the rest of the T2SS machinery. This chain is Type II secretion system protein M (xcpZ), found in Pseudomonas aeruginosa (strain ATCC 15692 / DSM 22644 / CIP 104116 / JCM 14847 / LMG 12228 / 1C / PRS 101 / PAO1).